We begin with the raw amino-acid sequence, 270 residues long: Gene 1 protein (270 aa).

Positions 225 to 249 (WAEEDPPVAAVPLEPEDATAPGKEP) are disordered.

This chain is Gene 1 protein (1), found in Mycobacterium (Mycobacteriophage D29).